A 354-amino-acid chain; its full sequence is Lysophosphatidic acid receptor 3 (354 aa).

Over M1 to V31 the chain is Extracellular. A glycan (N-linked (GlcNAc...) asparagine) is linked at N15. Residues I32–I52 form a helical membrane-spanning segment. Residues A53 to Y67 are Cytoplasmic-facing. Residues L68–F88 form a helical membrane-spanning segment. At N89–R101 the chain is on the extracellular side. A helical membrane pass occupies residues W102–A124. Topologically, residues V125–T146 are cytoplasmic. A helical membrane pass occupies residues L147–W167. Residues N168–S186 are Extracellular-facing. An N-linked (GlcNAc...) asparagine glycan is attached at N172. The chain crosses the membrane as a helical span at residues Y187 to V207. The Cytoplasmic portion of the chain corresponds to R208–T240. A helical membrane pass occupies residues V241 to L261. Topologically, residues D262–R276 are extracellular. A helical transmembrane segment spans residues W277 to Y295. The Cytoplasmic segment spans residues K296–S354. A lipid anchor (S-palmitoyl cysteine) is attached at C309.

This sequence belongs to the G-protein coupled receptor 1 family.

The protein localises to the cell membrane. In terms of biological role, receptor for lysophosphatidic acid (LPA), a mediator of diverse cellular activities. Seems to be coupled to the G(i)/G(o) and G(q) families of heteromeric G proteins. This is Lysophosphatidic acid receptor 3 (Lpar3) from Rattus norvegicus (Rat).